The primary structure comprises 127 residues: Mitochondrial pyruvate carrier 2 (127 aa).

The Mitochondrial matrix portion of the chain corresponds to alanine 2–threonine 40. Position 26 is an N6-acetyllysine (lysine 26). Residues valine 41 to alanine 61 form a helical membrane-spanning segment. At arginine 62–serine 72 the chain is on the mitochondrial intermembrane side. A helical membrane pass occupies residues threonine 73–isoleucine 90. Over proline 91 to serine 95 the chain is Mitochondrial matrix. A helical transmembrane segment spans residues leucine 96–tryptophan 115. Residues lysine 116–glutamine 127 lie on the Mitochondrial intermembrane side of the membrane.

The protein belongs to the mitochondrial pyruvate carrier (MPC) (TC 2.A.105) family. Homodimer. Homooligomer. Forms heterodimers with MPC1 and MPC1L. The heterodimer is the more stable and dominant form. In terms of tissue distribution, liver, kidney, and brain.

The protein resides in the mitochondrion inner membrane. The catalysed reaction is pyruvate(out) + H(+)(out) = pyruvate(in) + H(+)(in). Its function is as follows. Mediates the uptake of pyruvate into mitochondria. This Rattus norvegicus (Rat) protein is Mitochondrial pyruvate carrier 2 (Mpc2).